Consider the following 337-residue polypeptide: Phosphatidylglycerophosphate phosphatase PTPMT1 (337 aa).

The disordered stretch occupies residues 1–20; the sequence is MYIKELTETDEEKRERSVED. Residues tyrosine 55 and aspartate 133 each contribute to the substrate site. The Tyrosine-protein phosphatase domain occupies 73 to 220; that stretch reads WWDRVAEFIL…VVEYYHVKVL (148 aa). The Phosphocysteine intermediate role is filled by cysteine 164. The short motif at 164–170 is the Glucan phosphatase signature motif CXAGXGR element; sequence CKAGRGR. Residue 165 to 170 coordinates substrate; sequence KAGRGR.

Belongs to the protein-tyrosine phosphatase family. Non-receptor class dual specificity subfamily. In terms of tissue distribution, expressed in stems, roots, flowers, mature seeds and leaves.

It catalyses the reaction O-phospho-L-seryl-[protein] + H2O = L-seryl-[protein] + phosphate. The enzyme catalyses O-phospho-L-threonyl-[protein] + H2O = L-threonyl-[protein] + phosphate. It carries out the reaction O-phospho-L-tyrosyl-[protein] + H2O = L-tyrosyl-[protein] + phosphate. The catalysed reaction is a 1,2-diacyl-sn-glycero-3-phospho-(1'-sn-glycero-3'-phosphate) + H2O = a 1,2-diacyl-sn-glycero-3-phospho-(1'-sn-glycerol) + phosphate. It functions in the pathway phospholipid metabolism; phosphatidylglycerol biosynthesis; phosphatidylglycerol from CDP-diacylglycerol: step 2/2. In terms of biological role, exhibits phosphatidylglycerophosphate phosphatase activity. Involved in root growth and columella cells organization. May possess protein phosphatase activity. This Arabidopsis thaliana (Mouse-ear cress) protein is Phosphatidylglycerophosphate phosphatase PTPMT1.